Reading from the N-terminus, the 296-residue chain is Giardin subunit alpha-4 (296 aa).

Annexin repeat units follow at residues 3–72, 74–146, 153–223, and 226–294; these read ATVS…VHAW, SRFE…GWVK, KSIK…AHHW, and DPGQ…VFWR.

This sequence belongs to the annexin family. Giardin subunit alpha subfamily.

The protein localises to the cytoplasm. Its subcellular location is the cytoskeleton. Functionally, giardins are involved in parasite attachment to the intestinal mucosa and in the cytoskeletal disassembly and reassembly that marks the transition from infectious trophozoite to transmissible cyst. They may interact with other cytoskeletal proteins such as microtubules in the microribbons or crossbridges, to maintain the integrity of the ventral disk. This is Giardin subunit alpha-4 from Giardia intestinalis (Giardia lamblia).